The sequence spans 258 residues: Snake venom serine protease 5 (258 aa).

Positions 1–18 (MVLIRVLANLLILQLSYA) are cleaved as a signal peptide. Positions 19–24 (QKSSEL) are excised as a propeptide. The 225-residue stretch at 25–249 (VVGGRPCNIN…HLDWIQNIIA (225 aa)) folds into the Peptidase S1 domain. Cystine bridges form between Cys31/Cys163, Cys50/Cys66, Cys98/Cys256, Cys142/Cys210, Cys174/Cys189, and Cys200/Cys225. N-linked (GlcNAc...) asparagine glycosylation is present at Asn44. The Charge relay system role is filled by His65. Asn103 carries an N-linked (GlcNAc...) asparagine glycan. The active-site Charge relay system is the Asp110. Residues Asn121, Asn122, Asn154, and Asn170 are each glycosylated (N-linked (GlcNAc...) asparagine). Ser204 serves as the catalytic Charge relay system. Residue Asn251 is glycosylated (N-linked (GlcNAc...) asparagine).

Belongs to the peptidase S1 family. Snake venom subfamily. In terms of assembly, monomer. In terms of tissue distribution, expressed by the venom gland.

It is found in the secreted. Functionally, snake venom serine protease that may act in the hemostasis system of the prey. The polypeptide is Snake venom serine protease 5 (Trimeresurus stejnegeri (Chinese green tree viper)).